Here is a 472-residue protein sequence, read N- to C-terminus: Adenosylhomocysteinase (472 aa).

Substrate is bound by residues Thr60, Asp136, and Glu197. 198-200 (TTT) lines the NAD(+) pocket. Residues Lys227 and Asp231 each contribute to the substrate site. Residues Asn232, 261-266 (GYGDVG), Glu284, Asn319, 340-342 (IGH), and Asn388 contribute to the NAD(+) site.

It belongs to the adenosylhomocysteinase family. NAD(+) serves as cofactor.

It localises to the cytoplasm. The enzyme catalyses S-adenosyl-L-homocysteine + H2O = L-homocysteine + adenosine. The protein operates within amino-acid biosynthesis; L-homocysteine biosynthesis; L-homocysteine from S-adenosyl-L-homocysteine: step 1/1. Its function is as follows. May play a key role in the regulation of the intracellular concentration of adenosylhomocysteine. This chain is Adenosylhomocysteinase, found in Maridesulfovibrio salexigens (strain ATCC 14822 / DSM 2638 / NCIMB 8403 / VKM B-1763) (Desulfovibrio salexigens).